A 664-amino-acid chain; its full sequence is UvrABC system protein B (664 aa).

The Helicase ATP-binding domain occupies Lys25–Arg182. Gly38 to Thr45 contacts ATP. A Beta-hairpin motif is present at residues Tyr91–Met114. The Helicase C-terminal domain maps to Gln429–Leu595. Positions Asp625 to Asp660 constitute a UVR domain.

The protein belongs to the UvrB family. Forms a heterotetramer with UvrA during the search for lesions. Interacts with UvrC in an incision complex.

It is found in the cytoplasm. Functionally, the UvrABC repair system catalyzes the recognition and processing of DNA lesions. A damage recognition complex composed of 2 UvrA and 2 UvrB subunits scans DNA for abnormalities. Upon binding of the UvrA(2)B(2) complex to a putative damaged site, the DNA wraps around one UvrB monomer. DNA wrap is dependent on ATP binding by UvrB and probably causes local melting of the DNA helix, facilitating insertion of UvrB beta-hairpin between the DNA strands. Then UvrB probes one DNA strand for the presence of a lesion. If a lesion is found the UvrA subunits dissociate and the UvrB-DNA preincision complex is formed. This complex is subsequently bound by UvrC and the second UvrB is released. If no lesion is found, the DNA wraps around the other UvrB subunit that will check the other stand for damage. The protein is UvrABC system protein B of Leptospira biflexa serovar Patoc (strain Patoc 1 / Ames).